The sequence spans 1293 residues: Period circadian protein homolog 1 (1293 aa).

The disordered stretch occupies residues 1–134 (MSGPLEGADG…SSEQSARART (134 aa)). The interval 1 to 151 (MSGPLEGADG…LRELKLRLPP (151 aa)) is interaction with BTRC. Composition is skewed to low complexity over residues 48–57 (NSNGSSGNES) and 64–115 (GASQ…ASSE). The segment covering 116 to 132 (QDNPSTSGCSSEQSARA) has biased composition (polar residues). The residue at position 121 (Thr121) is a Phosphothreonine; by CSNK1E. 2 positions are modified to phosphoserine; by CSNK1E: Ser122 and Ser126. The short motif at 138–147 (LMTALRELKL) is the Nuclear export signal 1 element. 2 consecutive PAS domains span residues 208–275 (ITSE…PSRL) and 348–414 (YEAP…KILQ). Positions 422–465 (HSPIRFCARNGEYVTMDTSWAGFVHPWSRKVAFVLGRHKVRTAP) constitute a PAC domain. The Nuclear export signal 2 signature appears at 489 to 498 (LSEQIHRLLL). Disordered stretches follow at residues 509-544 (LCGVGPLMSPGPLHSPGSSSDSNGGDAEGPGPPAPV) and 647-697 (TKRK…KEPV). 2 stretches are compositionally biased toward low complexity: residues 513 to 533 (GPLMSPGPLHSPGSSSDSNGG) and 652 to 661 (ASSSCTASSA). A required for phosphorylation by CSNK1E region spans residues 596 to 814 (ELEVAPAPDQ…GLDTSSVAPS (219 aa)). Phosphoserine is present on residues Ser660, Ser662, and Ser703. Disordered regions lie at residues 748–771 (GLAPGPAPSPAPSPTVAPDPAPDA), 808–870 (TSSV…PPAT), 935–1094 (SQAP…SKYF), and 1204–1293 (SVQD…NGTS). The span at 750 to 768 (APGPAPSPAPSPTVAPDPA) shows a compositional bias: pro residues. Ser814 carries the phosphoserine modification. The short motif at 823-839 (IPSGRRHHCRSKAKRSR) is the Nuclear localization signal element. Residues 826–843 (GRRHHCRSKAKRSRHHQT) show a composition bias toward basic residues. 2 stretches are compositionally biased toward pro residues: residues 856–870 (SPVPSSGPWPPPPAT) and 952–962 (PSLPPPPPSPP). The span at 969-982 (LFNSRCSSPLQLNL) shows a compositional bias: polar residues. Ser975 and Ser976 each carry phosphoserine. The Nuclear export signal 3 motif lies at 978–985 (LQLNLLQL). Residues 1032–1058 (LSGSSDLLELLLQEDSRSGTGSAASGS) are compositionally biased toward low complexity. The short motif at 1039 to 1043 (LELLL) is the LXXLL element. Residues 1059–1073 (LGSGLGSGSGSGSHE) show a composition bias toward gly residues. Residues 1074–1091 (GGSTSASITRSSQSSHTS) are compositionally biased toward low complexity. Residues 1145 to 1293 (SRDAASVLKQ…ALPAEENGTS (149 aa)) are CRY binding domain. Positions 1232–1250 (GEGGGVGGGGGGVGGGGGD) are enriched in gly residues. The segment covering 1255–1269 (AQTQIGTKGSSSQDS) has biased composition (polar residues).

Homodimer. Component of the circadian core oscillator, which includes the CRY proteins, CLOCK or NPAS2, BMAL1 or BMAL2, CSNK1D and/or CSNK1E, TIMELESS, and the PER proteins. Interacts directly with TIMELESS, PER2, PER3, CRY1 and CRY2. Interacts with BMAL1 and CLOCK. Interacts with GPRASP1. Interacts (phosphorylated) with BTRC and FBXW11; the interactions trigger proteasomal degradation. Interacts with NONO and WDR5. Interacts with SFPQ. Interacts with USP2. Interacts with HNF4A. Phosphorylated on serine residues by CSNK1D, CSNK1E and probably also by CSNK1G2. Phosphorylation by CSNK1D or CSNK1E promotes nuclear location of PER proteins as well as ubiquitination and subsequent degradation. May be dephosphorylated by PP1. In terms of processing, ubiquitinated; requires phosphorylation by CSNK1E and interaction with BTRC and FBXW11. Deubiquitinated by USP2. As to expression, expressed in pancreas. In the CNS, highly expressed in the SCN, internal granular layer of granular cells of the olfactory bulb, tuberculum olfactorium, piriform cortex, gyrus dentatus of the hippocampus, cerebellum, pars tuberalis/median eminence, and pituitary, and moderately in the tenia tecta, caudate putamen, accumbens nucleus, spinal cord, superior and inferior colliculus and pineal gland.

It is found in the nucleus. The protein resides in the cytoplasm. In terms of biological role, transcriptional repressor which forms a core component of the circadian clock. The circadian clock, an internal time-keeping system, regulates various physiological processes through the generation of approximately 24 hour circadian rhythms in gene expression, which are translated into rhythms in metabolism and behavior. It is derived from the Latin roots 'circa' (about) and 'diem' (day) and acts as an important regulator of a wide array of physiological functions including metabolism, sleep, body temperature, blood pressure, endocrine, immune, cardiovascular, and renal function. Consists of two major components: the central clock, residing in the suprachiasmatic nucleus (SCN) of the brain, and the peripheral clocks that are present in nearly every tissue and organ system. Both the central and peripheral clocks can be reset by environmental cues, also known as Zeitgebers (German for 'timegivers'). The predominant Zeitgeber for the central clock is light, which is sensed by retina and signals directly to the SCN. The central clock entrains the peripheral clocks through neuronal and hormonal signals, body temperature and feeding-related cues, aligning all clocks with the external light/dark cycle. Circadian rhythms allow an organism to achieve temporal homeostasis with its environment at the molecular level by regulating gene expression to create a peak of protein expression once every 24 hours to control when a particular physiological process is most active with respect to the solar day. Transcription and translation of core clock components (CLOCK, NPAS2, BMAL1, BMAL2, PER1, PER2, PER3, CRY1 and CRY2) plays a critical role in rhythm generation, whereas delays imposed by post-translational modifications (PTMs) are important for determining the period (tau) of the rhythms (tau refers to the period of a rhythm and is the length, in time, of one complete cycle). A diurnal rhythm is synchronized with the day/night cycle, while the ultradian and infradian rhythms have a period shorter and longer than 24 hours, respectively. Disruptions in the circadian rhythms contribute to the pathology of cardiovascular diseases, cancer, metabolic syndromes and aging. A transcription/translation feedback loop (TTFL) forms the core of the molecular circadian clock mechanism. Transcription factors, CLOCK or NPAS2 and BMAL1 or BMAL2, form the positive limb of the feedback loop, act in the form of a heterodimer and activate the transcription of core clock genes and clock-controlled genes (involved in key metabolic processes), harboring E-box elements (5'-CACGTG-3') within their promoters. The core clock genes: PER1/2/3 and CRY1/2 which are transcriptional repressors form the negative limb of the feedback loop and interact with the CLOCK|NPAS2-BMAL1|BMAL2 heterodimer inhibiting its activity and thereby negatively regulating their own expression. This heterodimer also activates nuclear receptors NR1D1/2 and RORA/B/G, which form a second feedback loop and which activate and repress BMAL1 transcription, respectively. Regulates circadian target genes expression at post-transcriptional levels, but may not be required for the repression at transcriptional level. Controls PER2 protein decay. Represses CRY2 preventing its repression on CLOCK/BMAL1 target genes such as FXYD5 and SCNN1A in kidney and PPARA in liver. Besides its involvement in the maintenance of the circadian clock, has an important function in the regulation of several processes. Participates in the repression of glucocorticoid receptor NR3C1/GR-induced transcriptional activity by reducing the association of NR3C1/GR to glucocorticoid response elements (GREs) by BMAL1:CLOCK. Plays a role in the modulation of the neuroinflammatory state via the regulation of inflammatory mediators release, such as CCL2 and IL6. In spinal astrocytes, negatively regulates the MAPK14/p38 and MAPK8/JNK MAPK cascades as well as the subsequent activation of NFkappaB. Coordinately regulates the expression of multiple genes that are involved in the regulation of renal sodium reabsorption. Can act as gene expression activator in a gene and tissue specific manner, in kidney enhances WNK1 and SLC12A3 expression in collaboration with CLOCK. Modulates hair follicle cycling. Represses the CLOCK-BMAL1 induced transcription of BHLHE40/DEC1. The polypeptide is Period circadian protein homolog 1 (Rattus norvegicus (Rat)).